The following is a 206-amino-acid chain: dITP/XTP pyrophosphatase (206 aa).

Position 10–15 (10–15) interacts with substrate; that stretch reads SRNAKK. The active-site Proton acceptor is Asp75. Asp75 lines the Mg(2+) pocket. Residues Ser76, 158-161, Lys181, and 186-187 contribute to the substrate site; these read FGYD and HR.

Belongs to the HAM1 NTPase family. In terms of assembly, homodimer. Mg(2+) is required as a cofactor.

It carries out the reaction XTP + H2O = XMP + diphosphate + H(+). It catalyses the reaction dITP + H2O = dIMP + diphosphate + H(+). The enzyme catalyses ITP + H2O = IMP + diphosphate + H(+). Its function is as follows. Pyrophosphatase that catalyzes the hydrolysis of nucleoside triphosphates to their monophosphate derivatives, with a high preference for the non-canonical purine nucleotides XTP (xanthosine triphosphate), dITP (deoxyinosine triphosphate) and ITP. Seems to function as a house-cleaning enzyme that removes non-canonical purine nucleotides from the nucleotide pool, thus preventing their incorporation into DNA/RNA and avoiding chromosomal lesions. The chain is dITP/XTP pyrophosphatase from Nocardia farcinica (strain IFM 10152).